Here is a 278-residue protein sequence, read N- to C-terminus: UPF0758 protein BURPS668_0979 (278 aa).

Residues 1 to 64 form a disordered region; the sequence is MQYEIVSAGE…ATAAARRGRD (64 aa). A compositionally biased stretch (low complexity) spans 22-59; it reads AAAPAAPSSAVPSSAALSSAALSSAARPTGAPPATAAA. In terms of domain architecture, MPN spans 156 to 278; that stretch reads LVDSPGAVDD…TFSFAQAGWI (123 aa). Zn(2+)-binding residues include His-227, His-229, and Asp-240. A JAMM motif motif is present at residues 227-240; that stretch reads HNHPSGAVRPSAAD.

It belongs to the UPF0758 family.

This chain is UPF0758 protein BURPS668_0979, found in Burkholderia pseudomallei (strain 668).